A 655-amino-acid chain; its full sequence is MEHIRTTKVEQVKLLDRFSTNNKSLTGTLYLTATHLLFIDAHQKETWILHHHIASVEKLALTTSGCPLVIQCKNFRIVHFIVPRERDCHDIYNSLLQLSKQAKYEDLYAFSYNPKQNDTERLNGWQLIDLAAEYERMGVPNANWQLSDANREYKVCETYPRELYVPRTASRPVIVGSSNFRSKGRLPVLSYCQQGTEAAICRCSQPLSGFSARCLEDEHLLQAISKANPGNRYMYVVDTRPKLRMQSWWDTQKDIGRIIVRISSKIWNDEKIRESDEKKRLNAMANRAAGKGYENEDNYSNIRFQFVGIENIHVMRSSLQKLLEVNGSKGLSVNDFYSGLESSGWLRHIKAVLDAAIFLAKAIVVENASVLVHCSDGWDRTSQVCSLGSLLLDSYYRTMKGFMVLIEKDWISFGHKFSERCGHLDGDPKEVSPVFTQFLECVWHLTEQFPQAFEFNEAFLLQIHEHIHSCQFGNFLGNCQKEREELRLKEKTYSLWPFLLADKKKYLNPLYSSKSQRLTVLEPNTASFNFKFWRNMYHQFDRTLHPRQSVLNIIMNMNEQNKQLEEDVKDLEAKIKQCKSGILTKDLLHAVHPESPSLKTSLCLKEQSLLPVKDTLRAVEGSSPADNRYCDYTEEFSKSEPAVVSLEYGVARMTC.

Positions 1–101 (MEHIRTTKVE…YNSLLQLSKQ (101 aa)) constitute a GRAM domain. Residues 2–141 (EHIRTTKVEQ…AEYERMGVPN (140 aa)) form an interaction with RAB1B region. Tyrosine 108 bears the Phosphotyrosine mark. Positions 124–537 (GWQLIDLAAE…FNFKFWRNMY (414 aa)) constitute a Myotubularin phosphatase domain. Asparagine 286, asparagine 311, and isoleucine 312 together coordinate a 1,2-diacyl-sn-glycero-3-phospho-(1D-myo-inositol-3,5-bisphosphate). A 1,2-diacyl-sn-glycero-3-phospho-(1D-myo-inositol-3-phosphate)-binding residues include asparagine 286, asparagine 311, and isoleucine 312. Cysteine 374 serves as the catalytic Phosphocysteine intermediate. Serine 375, aspartate 376, glycine 377, tryptophan 378, aspartate 379, arginine 380, lysine 416, and arginine 420 together coordinate a 1,2-diacyl-sn-glycero-3-phospho-(1D-myo-inositol-3,5-bisphosphate). A 1,2-diacyl-sn-glycero-3-phospho-(1D-myo-inositol-3-phosphate)-binding residues include serine 375, aspartate 376, glycine 377, tryptophan 378, aspartate 379, and arginine 380. Residue arginine 420 coordinates a 1,2-diacyl-sn-glycero-3-phospho-(1D-myo-inositol-3-phosphate). Residues 547–581 (RQSVLNIIMNMNEQNKQLEEDVKDLEAKIKQCKSG) are a coiled coil. 3 positions are modified to phosphoserine: serine 595, serine 623, and serine 645.

It belongs to the protein-tyrosine phosphatase family. Non-receptor class myotubularin subfamily. Homodimer. Heterodimer (via C-terminus) with MTMR9 (via C-terminus). Interacts with ALKBH4. Interacts with KCNN4. Interacts (via GRAM domain) with RAB1B (in GDP-bound form); the interaction regulates MTMR6 recruitment to the endoplasmic reticulum-Golgi intermediate compartment.

It localises to the cytoplasm. The protein resides in the endoplasmic reticulum. It is found in the cell projection. The protein localises to the ruffle membrane. Its subcellular location is the endoplasmic reticulum-Golgi intermediate compartment. It localises to the perinuclear region. It carries out the reaction a 1,2-diacyl-sn-glycero-3-phospho-(1D-myo-inositol-3,5-bisphosphate) + H2O = a 1,2-diacyl-sn-glycero-3-phospho-(1D-myo-inositol-5-phosphate) + phosphate. The catalysed reaction is a 1,2-diacyl-sn-glycero-3-phospho-(1D-myo-inositol-3-phosphate) + H2O = a 1,2-diacyl-sn-glycero-3-phospho-(1D-myo-inositol) + phosphate. The enzyme catalyses 1,2-dioctanoyl-sn-glycero-3-phospho-(1D-myo-inositol-3,5-bisphosphate) + H2O = 1,2-dioctanoyl-sn-glycero-3-phospho-(1D-myo-inositol-5-phosphate) + phosphate. It catalyses the reaction 1,2-dioctanoyl-sn-glycero-3-phospho-(1-D-myo-inositol-3-phosphate) + H2O = 1,2-dioctanoyl-sn-glycero-3-phospho-(1D-myo-inositol) + phosphate. Its activity is regulated as follows. Allosterically activated by phosphatidylserine and/or phosphatidylinositol 4-phosphate (PtdIns(4)P), and phosphatidylinositol 5-phosphate (PtdIns(5)P). Interaction with MTMR9 increases catalytic activity towards phosphatidylinositol 3,5-bisphosphate. Functionally, lipid phosphatase that specifically dephosphorylates the D-3 position of phosphatidylinositol 3-phosphate and phosphatidylinositol 3,5-bisphosphate, generating phosphatidylinositol and phosphatidylinositol 5-phosphate. Binds with high affinity to phosphatidylinositol 3,5-bisphosphate (PtdIns(3,5)P2) but also to phosphatidylinositol 3-phosphate (PtdIns(3)P), phosphatidylinositol 4-phosphate (PtdIns(4)P), and phosphatidylinositol 5-phosphate (PtdIns(5)P), phosphatidic acid and phosphatidylserine. Negatively regulates ER-Golgi protein transport. Probably in association with MTMR9, plays a role in the late stages of macropinocytosis by dephosphorylating phosphatidylinositol 3-phosphate in membrane ruffles. Acts as a negative regulator of KCNN4/KCa3.1 channel activity in CD4(+) T-cells possibly by decreasing intracellular levels of phosphatidylinositol 3-phosphate. Negatively regulates proliferation of reactivated CD4(+) T-cells. In complex with MTMR9, negatively regulates DNA damage-induced apoptosis. The formation of the MTMR6-MTMR9 complex stabilizes both MTMR6 and MTMR9 protein levels. This chain is Phosphatidylinositol-3,5-bisphosphate 3-phosphatase MTMR6, found in Rattus norvegicus (Rat).